A 580-amino-acid chain; its full sequence is Mucolipin-1 (580 aa).

A disordered region spans residues 1-38 (MATPAGRRASETERLLTPNPGYGTQVGTSPAPTTPTEE). At 1-65 (MATPAGRRAS…FRAKGRKPCK (65 aa)) the chain is on the cytoplasmic side. Serine 10 is modified (phosphoserine). The short motif at 11–16 (ETERLL) is the Dileucine motif; mediates targeting to lysosomes element. Residues 42 to 62 (RRRLKYFFMSPCDKFRAKGRK) are interaction with phosphoinositides. The helical transmembrane segment at 66-86 (LMLQVVKILVVTVQLILFGLS) threads the bilayer. Over 87-298 (NQLVVTFREE…VSRHGDNSFR (212 aa)) the chain is Extracellular. The segment at 107 to 121 (LGYSDGSDDTFAAYT) is extracellular/lumenal pore loop. Cysteine 166 and cysteine 192 form a disulfide bridge. N-linked (GlcNAc...) asparagine glycosylation is found at asparagine 220 and asparagine 230. Cysteine 253 and cysteine 284 form a disulfide bridge. A helical transmembrane segment spans residues 299-321 (LLFDVVVILTCSLSFLLCARSLL). Residues 322 to 350 (RGFLLQNEFVVFMWRRRGREISLWERLEF) are Cytoplasmic-facing. Residues 351–371 (VNGWYILLVTSDVLTISGTVM) traverse the membrane as a helical segment. Topologically, residues 372–382 (KIGIEAKNLAS) are extracellular. Residues 383–405 (YDVCSILLGTSTLLVWVGVIRYL) traverse the membrane as a helical segment. Residues 406–427 (TFFHKYNILIATLRVALPSVMR) lie on the Cytoplasmic side of the membrane. Residues 428–448 (FCCCVAVIYLGYCFCGWIVLG) form a helical membrane-spanning segment. Residues 449–456 (PYHVKFRS) are Extracellular-facing. Residues 457–477 (LSMVSECLFSLINGDDMFVTF) constitute an intramembrane region (pore-forming). The Selectivity filter signature appears at 469-474 (NGDDMF). Residues 478–491 (AAMQAQQGHSSLVW) lie on the Extracellular side of the membrane. The chain crosses the membrane as a helical span at residues 492-513 (LFSQLYLYSFISLFIYMVLSLF). Over 514–580 (IALITGAYDT…SPEDHSLLVN (67 aa)) the chain is Cytoplasmic. The residue at position 557 (serine 557) is a Phosphoserine. Serine 559 is modified (phosphoserine; by PAK). The tract at residues 565-567 (CCC) is required for palmitoylation and association with membranes. A Dileucine internalization motif; mediates AP2 complex-dependent internalization motif is present at residues 573 to 578 (EDHSLL).

The protein belongs to the transient receptor (TC 1.A.4) family. Polycystin subfamily. MCOLN1 sub-subfamily. As to quaternary structure, homotetramer. Homooligomer. Can heterooligomerize with MCOLN2 or MCOLN3; heteromeric assemblies have different channel properties as compared to the respective homooligomers and may be tissue-specific. Interacts with PDCD6. Interacts with TMEM163. Interacts with LAPTM4B. Post-translationally, palmitoylated; involved in association with membranes. In terms of processing, phosphorylation by PKA inhibits channel activity. Dephosphorylation increases activity. Proteolytically cleaved probably involving multiple lysosomal proteases including cathepsin B; inhibits lysosomal channel activity. Widely expressed, with the highest expression in brain, liver and kidney.

It localises to the late endosome membrane. The protein localises to the lysosome membrane. It is found in the cytoplasmic vesicle membrane. The protein resides in the cell projection. Its subcellular location is the phagocytic cup. It localises to the cytoplasmic vesicle. The protein localises to the phagosome membrane. It is found in the cell membrane. The enzyme catalyses Ca(2+)(in) = Ca(2+)(out). It catalyses the reaction Fe(2+)(in) = Fe(2+)(out). The catalysed reaction is Mg(2+)(in) = Mg(2+)(out). It carries out the reaction K(+)(in) = K(+)(out). The enzyme catalyses Na(+)(in) = Na(+)(out). Channel activity is controlled by multiple regulatory mechanisms in different subcellular compartments. Lower pH by itself has an inhibitory effect on channel conductance. Channel function is transiently modulated by changes in Ca(2+) in a pH-dependent manner; pH changes modify the aggregation state of unitary channels; a negative cooperativity between extracellular/lumenal Ca(2+) and H(+) is suggested. Fe(2+) channel activity is potentiated by low pH. Regulated by phosphoinositides in a compartment-specific manner: in lysosomes activated by PtdIns(3,5)P2 (Phosphatidylinositol 3,5-bisphosphate) and at the plasma membrane inhibited by PtdIns(4,5)P2 (Phosphatidylinositol 4,5-bisphosphate). Its function is as follows. Nonselective cation channel probably playing a role in the regulation of membrane trafficking events and of metal homeostasis. Acts as a Ca(2+)-permeable cation channel with inwardly rectifying activity. Proposed to play a major role in Ca(2+) release from late endosome and lysosome vesicles to the cytoplasm, which is important for many lysosome-dependent cellular events, including the fusion and trafficking of these organelles, exocytosis and autophagy. Required for efficient uptake of large particles in macrophages in which Ca(2+) release from the lysosomes triggers lysosomal exocytosis. May also play a role in phagosome-lysosome fusion. Involved in lactosylceramide trafficking indicative for a role in the regulation of late endocytic membrane fusion/fission events. By mediating lysosomal Ca(2+) release is involved in regulation of mTORC1 signaling and in mTOR/TFEB-dependent lysosomal adaptation to environmental cues such as nutrient levels. Seems to act as lysosomal active oxygen species (ROS) sensor involved in ROS-induced TFEB activation and autophagy. Also functions as a Fe(2+) permeable channel in late endosomes and lysosomes. Also permeable to Mg(2+), Na(+). K(+) and Cs(+). Proposed to play a role in zinc homeostasis probably implicating its association with TMEM163. In adaptive immunity, TRPML2 and TRPML1 may play redundant roles in the function of the specialized lysosomes of B cells. May contribute to cellular lipase activity within the late endosomal pathway or at the cell surface which may be involved in processes of membrane reshaping and vesiculation, especially the growth of tubular structures. However, it is not known, whether it conveys the enzymatic activity directly, or merely facilitates the activity of an associated phospholipase. In Mus musculus (Mouse), this protein is Mucolipin-1.